Consider the following 576-residue polypeptide: Flagellin B (576 aa).

It belongs to the bacterial flagellin family. In terms of assembly, heteromer of FlaA and FlaB. Interacts with FliW. Interacts with FliS.

It localises to the secreted. The protein resides in the bacterial flagellum. Its function is as follows. Flagellin is the subunit protein which polymerizes to form the filaments of bacterial flagella. This Campylobacter jejuni subsp. jejuni serotype O:6 (strain 81116 / NCTC 11828) protein is Flagellin B (flaB).